We begin with the raw amino-acid sequence, 218 residues long: Cell division protein SepF (218 aa).

Residues aspartate 25–glutamine 115 are disordered. A compositionally biased stretch (polar residues) spans serine 29–alanine 43. Residues proline 47 to arginine 63 are compositionally biased toward basic and acidic residues.

This sequence belongs to the SepF family. In terms of assembly, homodimer. Interacts with FtsZ.

The protein localises to the cytoplasm. Its function is as follows. Cell division protein that is part of the divisome complex and is recruited early to the Z-ring. Probably stimulates Z-ring formation, perhaps through the cross-linking of FtsZ protofilaments. Its function overlaps with FtsA. The protein is Cell division protein SepF of Streptococcus pyogenes serotype M12 (strain MGAS2096).